We begin with the raw amino-acid sequence, 344 residues long: Probable dual-specificity RNA methyltransferase RlmN (344 aa).

Catalysis depends on E92, which acts as the Proton acceptor. Positions 98-325 (DEDRATLCVS…TTIRASRGED (228 aa)) constitute a Radical SAM core domain. An intrachain disulfide couples C105 to C330. [4Fe-4S] cluster is bound by residues C112, C116, and C119. S-adenosyl-L-methionine is bound by residues 157–158 (GE), S189, 211–213 (SLH), and H287. C330 functions as the S-methylcysteine intermediate in the catalytic mechanism.

The protein belongs to the radical SAM superfamily. RlmN family. The cofactor is [4Fe-4S] cluster.

The protein resides in the cytoplasm. It carries out the reaction adenosine(2503) in 23S rRNA + 2 reduced [2Fe-2S]-[ferredoxin] + 2 S-adenosyl-L-methionine = 2-methyladenosine(2503) in 23S rRNA + 5'-deoxyadenosine + L-methionine + 2 oxidized [2Fe-2S]-[ferredoxin] + S-adenosyl-L-homocysteine. The enzyme catalyses adenosine(37) in tRNA + 2 reduced [2Fe-2S]-[ferredoxin] + 2 S-adenosyl-L-methionine = 2-methyladenosine(37) in tRNA + 5'-deoxyadenosine + L-methionine + 2 oxidized [2Fe-2S]-[ferredoxin] + S-adenosyl-L-homocysteine. In terms of biological role, specifically methylates position 2 of adenine 2503 in 23S rRNA and position 2 of adenine 37 in tRNAs. This is Probable dual-specificity RNA methyltransferase RlmN from Bacteroides fragilis (strain YCH46).